The chain runs to 671 residues: cGMP-dependent protein kinase 1 (671 aa).

The residue at position 2 (Ser2) is an N-acetylserine. Positions 2-59 (SELEEDFAKILMLKEERIKELEKRLSEKEEEIQELKRKLHKCQSVLPVPSTHIGPRTT) form a coiled coil. The segment at 2 to 102 (SELEEDFAKI…LIKEAILDND (101 aa)) is required for dimerization. Positions 9-44 (AKILMLKEERIKELEKRLSEKEEEIQELKRKLHKCQ) are leucine-zipper. An autoinhibitory domain region spans residues 50-75 (PSTHIGPRTTRAQGISAEPQTYRSFH). Thr59 is subject to Phosphothreonine; by autocatalysis. A cGMP-binding, high affinity region spans residues 103–220 (FMKNLELSQI…EYMEFLKSVP (118 aa)). Residues 167–170 (GELA), 177–178 (RT), Arg282, 291–294 (GEKA), 301–302 (RT), and Tyr336 contribute to the 3',5'-cyclic GMP site. Residues 221–341 (TFQSLPEEIL…SNKAYEDAEA (121 aa)) form a cGMP-binding, low affinity region. The Protein kinase domain occupies 360–619 (FNIIDTLGVG…VKDIQKHKWF (260 aa)). ATP is bound by residues 366–374 (LGVGGFGRV) and Lys390. Asp484 serves as the catalytic Proton acceptor. At Thr515 the chain carries Phosphothreonine. Residues 620–671 (EGFNWEGLRKGTLTPPIIPSVASPTDTSNFDGFPEDNDEPPPDDNSGWDIDF) enclose the AGC-kinase C-terminal domain. The tract at residues 635–671 (PIIPSVASPTDTSNFDGFPEDNDEPPPDDNSGWDIDF) is disordered. Residues 652 to 661 (FPEDNDEPPP) are compositionally biased toward acidic residues.

It belongs to the protein kinase superfamily. AGC Ser/Thr protein kinase family. cGMP subfamily. As to quaternary structure, isoform alpha: parallel homodimer or heterodimer and also heterotetramer. Interacts directly with PPP1R12A. Non-covalent dimer of dimer of PRKG1-PRKG1 and PPP1R12A-PPP1R12A. This interaction targets PRKG1 to stress fibers to mediate smooth muscle cell relaxation and vasodilation in responses to rises in cGMP. Isoform beta: antiparallel homodimer. Part of cGMP kinase signaling complex at least composed of ACTA2/alpha-actin, CNN1/calponin H1, PLN/phospholamban, PRKG1 and ITPR1. Interacts with IRAG1. Forms a stable complex with ITPR1, IRAG1, and isoform beta of PRKG1. Interacts with TRPC7 (via ankyrin repeat domain). Isoform alpha interacts with RGS2. Interacts with GTF2I. Autophosphorylation increases kinase activity. In terms of processing, 65 kDa monomer is produced by proteolytic cleavage.

Its subcellular location is the cytoplasm. It carries out the reaction L-seryl-[protein] + ATP = O-phospho-L-seryl-[protein] + ADP + H(+). The enzyme catalyses L-threonyl-[protein] + ATP = O-phospho-L-threonyl-[protein] + ADP + H(+). With respect to regulation, in the absence of cGMP, PRKG1 activity is suppressed by autoinhibitory contacts. Serine/threonine protein kinase that acts as a key mediator of the nitric oxide (NO)/cGMP signaling pathway. GMP binding activates PRKG1, which phosphorylates serines and threonines on many cellular proteins. Numerous protein targets for PRKG1 phosphorylation are implicated in modulating cellular calcium, but the contribution of each of these targets may vary substantially among cell types. Proteins that are phosphorylated by PRKG1 regulate platelet activation and adhesion, smooth muscle contraction, cardiac function, gene expression, feedback of the NO-signaling pathway, and other processes involved in several aspects of the CNS like axon guidance, hippocampal and cerebellar learning, circadian rhythm and nociception. Smooth muscle relaxation is mediated through lowering of intracellular free calcium, by desensitization of contractile proteins to calcium, and by decrease in the contractile state of smooth muscle or in platelet activation. Regulates intracellular calcium levels via several pathways: phosphorylates IRAG1 and inhibits IP3-induced Ca(2+) release from intracellular stores, phosphorylation of KCNMA1 (BKCa) channels decreases intracellular Ca(2+) levels, which leads to increased opening of this channel. PRKG1 phosphorylates the canonical transient receptor potential channel (TRPC) family which inactivates the associated inward calcium current. Another mode of action of NO/cGMP/PKGI signaling involves PKGI-mediated inactivation of the Ras homolog gene family member A (RhoA). Phosphorylation of RHOA by PRKG1 blocks the action of this protein in myriad processes: regulation of RHOA translocation; decreasing contraction; controlling vesicle trafficking, reduction of myosin light chain phosphorylation resulting in vasorelaxation. Activation of PRKG1 by NO signaling also alters gene expression in a number of tissues. In smooth muscle cells, increased cGMP and PRKG1 activity influence expression of smooth muscle-specific contractile proteins, levels of proteins in the NO/cGMP signaling pathway, down-regulation of the matrix proteins osteopontin and thrombospondin-1 to limit smooth muscle cell migration and phenotype. Regulates vasodilator-stimulated phosphoprotein (VASP) functions in platelets and smooth muscle. This is cGMP-dependent protein kinase 1 (PRKG1) from Oryctolagus cuniculus (Rabbit).